The primary structure comprises 382 residues: S-adenosylmethionine synthase (382 aa).

Glu-10 lines the Mg(2+) pocket. ATP is bound at residue His-16. Residue Glu-44 coordinates K(+). L-methionine contacts are provided by Glu-57 and Gln-100. ATP-binding positions include 166-168 (DTK), 234-237 (SGRF), Asp-245, 251-252 (RK), Ala-268, Lys-272, and Lys-276. An L-methionine-binding site is contributed by Asp-245. Lys-276 provides a ligand contact to L-methionine.

The protein belongs to the AdoMet synthase family. Mg(2+) serves as cofactor. The cofactor is K(+).

The enzyme catalyses L-methionine + ATP + H2O = S-adenosyl-L-methionine + phosphate + diphosphate. Its pathway is amino-acid biosynthesis; S-adenosyl-L-methionine biosynthesis; S-adenosyl-L-methionine from L-methionine: step 1/1. Catalyzes the formation of S-adenosylmethionine from methionine and ATP. The reaction comprises two steps that are both catalyzed by the same enzyme: formation of S-adenosylmethionine (AdoMet) and triphosphate, and subsequent hydrolysis of the triphosphate. In Schizosaccharomyces pombe (strain 972 / ATCC 24843) (Fission yeast), this protein is S-adenosylmethionine synthase (sam1).